We begin with the raw amino-acid sequence, 247 residues long: tRNA pseudouridine synthase A (247 aa).

Aspartate 58 functions as the Nucleophile in the catalytic mechanism. Tyrosine 116 is a substrate binding site.

The protein belongs to the tRNA pseudouridine synthase TruA family. Homodimer.

It carries out the reaction uridine(38/39/40) in tRNA = pseudouridine(38/39/40) in tRNA. Its function is as follows. Formation of pseudouridine at positions 38, 39 and 40 in the anticodon stem and loop of transfer RNAs. This is tRNA pseudouridine synthase A from Hydrogenobaculum sp. (strain Y04AAS1).